The sequence spans 127 residues: UPF0389 protein GA21628 (127 aa).

Residues 69–88 (IRLANIMIALTVIGCGIMVY) form a helical membrane-spanning segment.

This sequence belongs to the UPF0389 family.

Its subcellular location is the membrane. The sequence is that of UPF0389 protein GA21628 from Drosophila pseudoobscura pseudoobscura (Fruit fly).